The sequence spans 410 residues: Transposase for insertion sequence element IS801 (410 aa).

Belongs to the transposase 32 family.

Functionally, involved in the transposition of the insertion sequence. This chain is Transposase for insertion sequence element IS801, found in Pseudomonas savastanoi pv. phaseolicola (Pseudomonas syringae pv. phaseolicola).